Here is a 278-residue protein sequence, read N- to C-terminus: Protoheme IX farnesyltransferase 1 (278 aa).

The next 9 membrane-spanning stretches (helical) occupy residues 12 to 32, 35 to 55, 76 to 96, 98 to 118, 129 to 149, 158 to 178, 199 to 221, 226 to 248, and 255 to 275; these read VIWLLILASVAGYIYGGGGVD, LFSLLAVAFLSTGGSAAFNHY, LITPNAALAYSLALSATGISL, FLLLGLLPGLFVLLGWLFYAV, WLNIFGGGFAGNAVFLGGYAL, AVLISFAIYLWIPSHIWALAF, ERAVAVISAINAAAAAYILWLYL, GAGGALVALGVAATIATSIYAAV, and MWKMYKASSPILALFLIALIL.

It belongs to the UbiA prenyltransferase family. Protoheme IX farnesyltransferase subfamily.

The protein resides in the cell membrane. The enzyme catalyses heme b + (2E,6E)-farnesyl diphosphate + H2O = Fe(II)-heme o + diphosphate. The protein operates within porphyrin-containing compound metabolism; heme O biosynthesis; heme O from protoheme: step 1/1. Functionally, converts heme B (protoheme IX) to heme O by substitution of the vinyl group on carbon 2 of heme B porphyrin ring with a hydroxyethyl farnesyl side group. The polypeptide is Protoheme IX farnesyltransferase 1 (Pyrobaculum aerophilum (strain ATCC 51768 / DSM 7523 / JCM 9630 / CIP 104966 / NBRC 100827 / IM2)).